A 165-amino-acid chain; its full sequence is Large ribosomal subunit protein uL15 (165 aa).

Basic residues predominate over residues 1–29; it reads MTSKKKRQRGSRTHGGGSHKNRRGAGHRG. 2 disordered regions span residues 1 to 59 and 133 to 165; these read MTSK…QKVQ and KVEG…ADEE. Basic and acidic residues predominate over residues 30 to 47; the sequence is GRGDAGRDKHEFHNHEPL. Residues 154-165 are compositionally biased toward acidic residues; the sequence is AEETEDADADEE.

Belongs to the universal ribosomal protein uL15 family. In terms of assembly, part of the 50S ribosomal subunit. Interacts weakly with proteins L18e and L32e.

Its function is as follows. Binds to the 23S rRNA. This Haloarcula marismortui (strain ATCC 43049 / DSM 3752 / JCM 8966 / VKM B-1809) (Halobacterium marismortui) protein is Large ribosomal subunit protein uL15 (rpl15).